Consider the following 352-residue polypeptide: MSASTTATTRHDWALAEVKALFQQPFNDLLFQAQTVHRAHFDPNRVQVSTLLSIKTGACPEDCKYCPQSGHYNTGLEKQKLMEVQKVLEEAARAKAIGSTRFCMGAAWKHPSAKDMPYVLEMVKGVKAMGLETCMTLGKLDQEQTKALAQAGLDYYNHNLDTSPEFYGSIITTRTYSERLQTLAYVRDAGMKICSGGILGMGESLDDRAGLLIQLANLPEHPESVPINMLVKVAGTPLAEEEDVDPFDFIRMLAVARILMPKSHVRLSAGREQMNEQMQALAFMAGANSIFYGEKLLTTANPQADKDMQLFARLGIKPEAREEHADEVHQAAIEQALVEQRSSEMFYDAATA.

The Radical SAM core domain occupies 44–262; the sequence is NRVQVSTLLS…LAVARILMPK (219 aa). Residues cysteine 59, cysteine 63, and cysteine 66 each coordinate [4Fe-4S] cluster. Residues cysteine 103, cysteine 134, cysteine 194, and arginine 266 each contribute to the [2Fe-2S] cluster site.

Belongs to the radical SAM superfamily. Biotin synthase family. As to quaternary structure, homodimer. [4Fe-4S] cluster serves as cofactor. The cofactor is [2Fe-2S] cluster.

The enzyme catalyses (4R,5S)-dethiobiotin + (sulfur carrier)-SH + 2 reduced [2Fe-2S]-[ferredoxin] + 2 S-adenosyl-L-methionine = (sulfur carrier)-H + biotin + 2 5'-deoxyadenosine + 2 L-methionine + 2 oxidized [2Fe-2S]-[ferredoxin]. It functions in the pathway cofactor biosynthesis; biotin biosynthesis; biotin from 7,8-diaminononanoate: step 2/2. In terms of biological role, catalyzes the conversion of dethiobiotin (DTB) to biotin by the insertion of a sulfur atom into dethiobiotin via a radical-based mechanism. This is Biotin synthase from Pseudomonas putida (strain ATCC 47054 / DSM 6125 / CFBP 8728 / NCIMB 11950 / KT2440).